The chain runs to 423 residues: Polyglutamylase complex subunit TTLL1 (423 aa).

The region spanning methionine 1 to asparagine 367 is the TTL domain. ATP-binding positions include lysine 138, glutamine 144–glycine 145, serine 181–isoleucine 184, and lysine 194–aspartate 196. Glutamine 144 lines the a protein pocket. Arginine 220 contributes to the L-glutamate binding site. Residue threonine 241–asparagine 242 coordinates ATP. L-glutamate is bound at residue lysine 259. Mg(2+) is bound by residues aspartate 313, glutamate 326, and asparagine 328. An L-glutamate-binding site is contributed by lysine 344. Positions aspartate 390–lysine 423 are disordered.

This sequence belongs to the tubulin polyglutamylase family. In terms of assembly, part of the neuronal tubulin polyglutamylase complex which contains TPGS1, TPGS2, TTLL1, LRRC49 and NICN1. Interacts with PCM1, CSTPP1 and LRRC49. Mg(2+) serves as cofactor.

The protein localises to the cytoplasm. The protein resides in the cytoskeleton. It is found in the cilium basal body. It localises to the cilium axoneme. Its subcellular location is the cell projection. The protein localises to the cilium. The protein resides in the flagellum. It catalyses the reaction (L-glutamyl)(n)-gamma-L-glutamyl-L-glutamyl-[protein] + L-glutamate + ATP = (L-glutamyl)(n+1)-gamma-L-glutamyl-L-glutamyl-[protein] + ADP + phosphate + H(+). In terms of biological role, catalytic subunit of a polyglutamylase complex which modifies tubulin, generating side chains of glutamate on the gamma-carboxyl group of specific glutamate residues within the C-terminal tail of tubulin. Probably involved in the side-chain elongation step of the polyglutamylation reaction rather than the initiation step. Modifies both alpha- and beta-tubulins with a preference for the alpha-tail. Unlike most polyglutamylases of the tubulin--tyrosine ligase family, only displays a catalytic activity when in complex with other proteins as it is most likely lacking domains important for autonomous activity. Part of the neuronal tubulin polyglutamylase complex. Mediates cilia and flagella polyglutamylation which is essential for their biogenesis and motility. Involved in respiratory motile cilia function through the regulation of beating asymmetry. Essential for sperm flagella biogenesis, motility and male fertility. Involved in KLF4 glutamylation which impedes its ubiquitination, thereby leading to somatic cell reprogramming, pluripotency maintenance and embryogenesis. This is Polyglutamylase complex subunit TTLL1 (Ttll1) from Rattus norvegicus (Rat).